We begin with the raw amino-acid sequence, 254 residues long: Large ribosomal subunit protein uL2 (254 aa).

The protein belongs to the universal ribosomal protein uL2 family.

The polypeptide is Large ribosomal subunit protein uL2 (RPL2) (Candida glabrata (strain ATCC 2001 / BCRC 20586 / JCM 3761 / NBRC 0622 / NRRL Y-65 / CBS 138) (Yeast)).